The primary structure comprises 232 residues: Ion-translocating oxidoreductase complex subunit E (232 aa).

A run of 6 helical transmembrane segments spans residues 18 to 38, 39 to 59, 69 to 89, 93 to 113, 128 to 148, and 182 to 202; these read ALVQLLGLCPLLAVTATVTNG, LGLGLATTLVLIGSNATVSII, IPIFVMIIAAFVTVVQLLMNA, ELYQALGIFIPLIVTNCAIIG, AFDGLMMGLGFTVVLVLLGAM, and PFLLAILPPGAFLGMGLLIAA.

Belongs to the NqrDE/RnfAE family. As to quaternary structure, the complex is composed of six subunits: RnfA, RnfB, RnfC, RnfD, RnfE and RnfG.

The protein resides in the cell inner membrane. Part of a membrane-bound complex that couples electron transfer with translocation of ions across the membrane. The chain is Ion-translocating oxidoreductase complex subunit E from Pseudoalteromonas atlantica (strain T6c / ATCC BAA-1087).